A 517-amino-acid chain; its full sequence is Crotonobetaine/carnitine--CoA ligase (517 aa).

It belongs to the ATP-dependent AMP-binding enzyme family.

It carries out the reaction 4-(trimethylamino)butanoate + ATP + CoA = 4-(trimethylamino)butanoyl-CoA + AMP + diphosphate. It catalyses the reaction crotonobetaine + ATP + CoA = crotonobetainyl-CoA + AMP + diphosphate. The enzyme catalyses (R)-carnitine + ATP + CoA = (R)-carnitinyl-CoA + AMP + diphosphate. It functions in the pathway amine and polyamine metabolism; carnitine metabolism. In terms of biological role, catalyzes the transfer of CoA to carnitine, generating the initial carnitinyl-CoA needed for the CaiB reaction cycle. Also has activity toward crotonobetaine and gamma-butyrobetaine. The chain is Crotonobetaine/carnitine--CoA ligase from Escherichia coli (strain K12 / MC4100 / BW2952).